Reading from the N-terminus, the 217-residue chain is Oxygen-insensitive NAD(P)H nitroreductase (217 aa).

10 to 14 (RHSTK) is an FMN binding site. NAD(+) is bound by residues Lys-14, Thr-41, Thr-67, Asn-71, Lys-74, and Arg-107. Asn-71 serves as a coordination point for FMN. FMN is bound by residues 165-166 (EG) and 205-207 (KSR).

Belongs to the nitroreductase family. Homodimer. FMN is required as a cofactor.

Reduction of a variety of nitroaromatic compounds using NADH (and to lesser extent NADPH) as source of reducing equivalents; two electrons are transferred. The chain is Oxygen-insensitive NAD(P)H nitroreductase from Enterobacter cloacae.